The sequence spans 1337 residues: Partitioning defective 3 homolog (1337 aa).

S25 bears the Phosphoserine mark. Disordered regions lie at residues 81-109 (EQDPHHGGDGTSASSTGTQSPEIFGSELG) and 143-263 (SSDP…LENM). T91 carries the post-translational modification Phosphothreonine. A compositionally biased stretch (low complexity) spans 91–100 (TSASSTGTQS). 2 stretches are compositionally biased toward polar residues: residues 150 to 163 (GLSTSVSDNNFSSE) and 171 to 188 (TRWSTTAGFLKQNTTGSP). A phosphoserine mark is found at S156 and S174. Residues 190–203 (TCDRKKDENYRSLP) show a composition bias toward basic and acidic residues. A compositionally biased stretch (polar residues) spans 207–224 (SSWSNQFQRDNARSSLSA). The PDZ 1 domain maps to 271-359 (MVKLVQVPND…ARVIWFHVVP (89 aa)). S383 carries the post-translational modification Phosphoserine. Residues 397–441 (NAPQALPRAPRLSQPPEQLDAHPRLPHSAHASTKPPTAPALAPPN) form a disordered region. 2 consecutive PDZ domains span residues 461–546 (NIQL…LVFR) and 590–677 (EVPL…GMIQ). Phosphotyrosine is present on Y489. Phosphoserine occurs at positions 692, 695, 715, 728, 809, and 827. The segment at 712–936 (RRISHSLYSG…AAIDKSYDKP (225 aa)) is interaction with PRKCI and PRKCZ. K834 carries the post-translational modification N6-acetyllysine. Phosphoserine is present on S837. N6-acetyllysine is present on K851. 2 positions are modified to phosphoserine: S852 and S873. Disordered stretches follow at residues 866–888 (VDDQRAGSPNRDVGPSLGLKKSS), 932–1015 (SYDK…AKKG), 1028–1055 (KHRKDDKMEKMGRIKIQDSFTSEEDRVR), 1110–1271 (LNAR…LGGH), and 1284–1337 (LLRQ…PFYS). N6-acetyllysine is present on K885. Residues 935 to 1337 (KPMVDDDDEG…TPEKGRPFYS (403 aa)) are interaction with FRMD4A. The span at 939-953 (DDDDEGMETLEEDTE) shows a compositional bias: acidic residues. S962 is subject to Phosphoserine; by AURKA. 2 positions are modified to phosphoserine: S971 and S973. Composition is skewed to basic and acidic residues over residues 981 to 1009 (DPEKRDKAEKKKDKAGKDKKKDREKEKDK) and 1030 to 1043 (RKDDKMEKMGRIKI). Position 1046 is a phosphoserine (S1046). Residues 1050 to 1082 (EEDRVRMKEEQERIQAKTREFRERQARERDYAE) are a coiled coil. A compositionally biased stretch (polar residues) spans 1138-1147 (PGDSNRSTPS). The segment covering 1148 to 1175 (NHDRIQRLRQEFQQAKQDEDVEDRRRTY) has biased composition (basic and acidic residues). 3 coiled-coil regions span residues 1149–1172 (HDRIQRLRQEFQQAKQDEDVEDRR), 1199–1222 (VQVQRQRQEERESFQQAQRQYSSL), and 1278–1299 (MLETQELLRQEQRRKEQQLKKQ). The span at 1180–1203 (SWSSSRPASQSGRHSVSVEVQVQR) shows a compositional bias: low complexity. The segment covering 1219–1240 (YSSLPRQSRKNASSVSQDSWEQ) has biased composition (polar residues). A compositionally biased stretch (basic and acidic residues) spans 1284–1296 (LLRQEQRRKEQQL). The span at 1318–1327 (SQVARLNRLQ) shows a compositional bias: polar residues. Positions 1328-1337 (TPEKGRPFYS) are enriched in basic and acidic residues. N6-acetyllysine is present on K1331.

The protein belongs to the PAR3 family. As to quaternary structure, component of a complex whose core is composed of ARHGAP17, AMOT, PALS1, PATJ and PARD3/PAR3. Interacts (via PDZ 1 domain) with PARD6A, PARD6B and F11R/JAM1. Interacts with AURKA, AURKB and SIRT2. Interacts with PRKCI. Interacts with PRKCZ. Part of a complex with PARD6A or PARD6B, PRKCI or PRKCZ and CDC42 or RAC1. Interacts with LIMK2 and CDH5. Component of the Par polarity complex, composed of at least phosphorylated PRKCZ, PARD3 and TIAM1. Directly interacts with TIAM1 and TIAM2. Interacts with ECT2 and FBF1. Interacts (via PDZ 3 domain) with PTEN (via C-terminus). Interacts (via coiled-coil domain) with FRMD4A. Found in a complex with PARD3, CYTH1 and FRMD4A. Interacts with SAPCD2. Interacts with PRKCA. In terms of assembly, interacts with PRKCZ. Post-translationally, acetylated. Deacetylated by SIRT2, thereby inhibiting Schwann cell peripheral myelination. In terms of processing, phosphorylation at Ser-827 by PRKCZ and PRKCI occurs at the most apical tip of epithelial cell-cell contacts during the initial phase of tight junction formation and may promote dissociation of the complex with PARD6. EGF-induced Tyr-1127 phosphorylation mediates dissociation from LIMK2. Phosphorylation by AURKA at Ser-962 is required for the normal establishment of neuronal polarity. As to expression, isoform 1 is predominantly expressed in lung, glandular stomach, prostate, ovary and uterus. Isoform 1 is also expressed in brain, with a high expression in the cortex, hippocampus and in the striatum. Isoform 2 is predominantly expressed in intestinal epithelial cells, kidney and prostate.

The protein resides in the cytoplasm. It is found in the endomembrane system. It localises to the cell junction. The protein localises to the tight junction. Its subcellular location is the adherens junction. The protein resides in the cell cortex. It is found in the cytoskeleton. It localises to the cell membrane. In terms of biological role, adapter protein involved in asymmetrical cell division and cell polarization processes. Seems to play a central role in the formation of epithelial tight junctions. Association with PARD6B may prevent the interaction of PARD3 with F11R/JAM1, thereby preventing tight junction assembly. The PARD6-PARD3 complex links GTP-bound Rho small GTPases to atypical protein kinase C proteins. Required for establishment of neuronal polarity and normal axon formation in cultured hippocampal neurons. Involved in Schwann cell peripheral myelination. Targets the phosphatase PTEN to cell junctions. In Rattus norvegicus (Rat), this protein is Partitioning defective 3 homolog (Pard3).